The primary structure comprises 54 residues: UPF0391 membrane protein RC1_1636 (54 aa).

The next 2 helical transmembrane spans lie at 3–23 (YWALIFFVVALVAGVLGFGGI) and 30–50 (IAQILFFIFLVIFVVSLIMGL).

It belongs to the UPF0391 family.

The protein localises to the cell membrane. The chain is UPF0391 membrane protein RC1_1636 from Rhodospirillum centenum (strain ATCC 51521 / SW).